The chain runs to 126 residues: Aspartate 1-decarboxylase (126 aa).

Serine 25 acts as the Schiff-base intermediate with substrate; via pyruvic acid in catalysis. Serine 25 is modified (pyruvic acid (Ser)). Threonine 57 contributes to the substrate binding site. Tyrosine 58 serves as the catalytic Proton donor. 73-75 contributes to the substrate binding site; the sequence is GGA.

The protein belongs to the PanD family. As to quaternary structure, heterooctamer of four alpha and four beta subunits. Pyruvate serves as cofactor. Is synthesized initially as an inactive proenzyme, which is activated by self-cleavage at a specific serine bond to produce a beta-subunit with a hydroxyl group at its C-terminus and an alpha-subunit with a pyruvoyl group at its N-terminus.

It is found in the cytoplasm. The enzyme catalyses L-aspartate + H(+) = beta-alanine + CO2. The protein operates within cofactor biosynthesis; (R)-pantothenate biosynthesis; beta-alanine from L-aspartate: step 1/1. Catalyzes the pyruvoyl-dependent decarboxylation of aspartate to produce beta-alanine. This is Aspartate 1-decarboxylase from Acinetobacter baumannii (strain AB307-0294).